The primary structure comprises 375 residues: 23S rRNA (uracil(747)-C(5))-methyltransferase RlmC (375 aa).

[4Fe-4S] cluster contacts are provided by Cys3, Cys11, Cys14, and Cys87. Residues Gln212, Phe241, Glu262, and Asn307 each coordinate S-adenosyl-L-methionine. Cys334 (nucleophile) is an active-site residue.

The protein belongs to the class I-like SAM-binding methyltransferase superfamily. RNA M5U methyltransferase family. RlmC subfamily.

It carries out the reaction uridine(747) in 23S rRNA + S-adenosyl-L-methionine = 5-methyluridine(747) in 23S rRNA + S-adenosyl-L-homocysteine + H(+). Its function is as follows. Catalyzes the formation of 5-methyl-uridine at position 747 (m5U747) in 23S rRNA. The polypeptide is 23S rRNA (uracil(747)-C(5))-methyltransferase RlmC (Escherichia coli (strain SE11)).